The primary structure comprises 84 residues: Three-finger toxin MALT0070C (84 aa).

Residues 1–21 (MKTLLLTLVVVTIVCLDLGYT) form the signal peptide. 4 cysteine pairs are disulfide-bonded: Cys-24/Cys-43, Cys-36/Cys-60, Cys-64/Cys-71, and Cys-72/Cys-77.

This sequence belongs to the three-finger toxin family. Short-chain subfamily. In terms of tissue distribution, expressed by the venom gland.

The protein resides in the secreted. This chain is Three-finger toxin MALT0070C, found in Micrurus altirostris (Uruguayan coral snake).